Here is a 255-residue protein sequence, read N- to C-terminus: Enkurin (255 aa).

Polar residues predominate over residues 1 to 10; that stretch reads MDSPCTSESI. Disordered regions lie at residues 1–25 and 67–96; these read MDSP…PQHP and SKEK…DHPV. The span at 73-83 shows a compositional bias: basic residues; sequence PPKKKFNRCSP. The SH3-binding motif lies at 83–89; sequence PKKPAVP. In terms of domain architecture, Enkurin spans 160–252; sequence KRNEDVKKAQ…VIEKHKIIYI (93 aa). The interval 160–255 is interaction with TRPC proteins; the sequence is KRNEDVKKAQ…KHKIIYIANK (96 aa). The 12-residue stretch at 176 to 187 folds into the IQ domain; it reads IQENLKKAAMKR.

As to quaternary structure, microtubule inner protein component of sperm flagellar doublet microtubules. Binds calmodulin via its IQ domain. Interacts with TRPC1, TRPC2, TRPC5, but not TRPC3. Interacts with CFAP45. As to expression, high expression in testis and vomeronasal organ and lower expression in ovary, heart, lung, and brain. Not expressed in other tissues.

It localises to the cytoplasm. The protein resides in the cytoskeleton. It is found in the cilium axoneme. The protein localises to the flagellum axoneme. Its function is as follows. Adapter that functions to localize a calcium-sensitive signal transduction machinery in sperm to a calcium-permeable ion channel. Microtubule inner protein (MIP) part of the dynein-decorated doublet microtubules (DMTs) in cilia axoneme, which is required for motile cilia beating. This chain is Enkurin (Enkur), found in Mus musculus (Mouse).